The primary structure comprises 460 residues: tRNA modification GTPase MnmE (460 aa).

Arginine 24, glutamate 81, and lysine 121 together coordinate (6S)-5-formyl-5,6,7,8-tetrahydrofolate. Positions 218 to 384 (GLVVAIAGPP…MVEALAGFAA (167 aa)) constitute a TrmE-type G domain. Residues 228 to 233 (NVGKST), 247 to 253 (SPHAGTT), and 272 to 275 (DTAG) contribute to the GTP site. Residues serine 232 and threonine 253 each coordinate Mg(2+). Lysine 460 contacts (6S)-5-formyl-5,6,7,8-tetrahydrofolate.

The protein belongs to the TRAFAC class TrmE-Era-EngA-EngB-Septin-like GTPase superfamily. TrmE GTPase family. Homodimer. Heterotetramer of two MnmE and two MnmG subunits. The cofactor is K(+).

It localises to the cytoplasm. In terms of biological role, exhibits a very high intrinsic GTPase hydrolysis rate. Involved in the addition of a carboxymethylaminomethyl (cmnm) group at the wobble position (U34) of certain tRNAs, forming tRNA-cmnm(5)s(2)U34. The polypeptide is tRNA modification GTPase MnmE (Rhodopseudomonas palustris (strain HaA2)).